The chain runs to 196 residues: uncharacterized protein (196 aa).

In terms of domain architecture, HTH tetR-type spans 7–67; it reads RNTKEKILTA…AVIDNHVKIW (61 aa). The H-T-H motif DNA-binding region spans 30–49; sequence SINDILDETATGKGQFYYYF.

This is an uncharacterized protein from Lactococcus lactis subsp. lactis (Streptococcus lactis).